The following is a 218-amino-acid chain: Small ribosomal subunit protein uS3c (218 aa).

The 72-residue stretch at 47–118 (VQKQIKNSSN…KIQITLKNVL (72 aa)) folds into the KH type-2 domain.

The protein belongs to the universal ribosomal protein uS3 family. As to quaternary structure, part of the 30S ribosomal subunit.

The protein resides in the plastid. It is found in the chloroplast. The sequence is that of Small ribosomal subunit protein uS3c (rps3) from Angiopteris evecta (Mule's foot fern).